The chain runs to 117 residues: uncharacterized protein (117 aa).

It is found in the mitochondrion. This is an uncharacterized protein from Arabidopsis thaliana (Mouse-ear cress).